The following is a 412-amino-acid chain: Phosphoglycerate kinase (412 aa).

Substrate-binding positions include 24–26 (DLN), Arg-47, 70–73 (HLGR), Arg-130, and Arg-167. ATP contacts are provided by residues Lys-217, Gly-312, Glu-343, and 369 to 372 (GGDS).

It belongs to the phosphoglycerate kinase family. In terms of assembly, monomer.

It localises to the cytoplasm. The catalysed reaction is (2R)-3-phosphoglycerate + ATP = (2R)-3-phospho-glyceroyl phosphate + ADP. The protein operates within carbohydrate degradation; glycolysis; pyruvate from D-glyceraldehyde 3-phosphate: step 2/5. This Kineococcus radiotolerans (strain ATCC BAA-149 / DSM 14245 / SRS30216) protein is Phosphoglycerate kinase.